Here is a 274-residue protein sequence, read N- to C-terminus: MTQQLQSIIDTAWDNRASLSPAAAPKEVTEAVDHVIEALNNGQLRVATREGVGQWTVHQWIKKAVLLSFRLKDNVLMQSGDLNFFDKVPTKFAGMTEAEIAATGVRVVPPAVARRGSFVAKGAILMPSYVNIGAYVDEGTMVDTWATVGSCAQVGKNVHLSGGVGLGGVLEPLQANPTIIEDNCFIGARSEIVEGVIVEENSVISMGVYIGQSTPIYDRATGETSYGRVPAGSVVVSGNLPKDNGRYSMYAAIIVKKVDAKTRSTTSLNDLLRD.

The protein belongs to the transferase hexapeptide repeat family.

It is found in the cytoplasm. The enzyme catalyses (S)-2,3,4,5-tetrahydrodipicolinate + succinyl-CoA + H2O = (S)-2-succinylamino-6-oxoheptanedioate + CoA. It participates in amino-acid biosynthesis; L-lysine biosynthesis via DAP pathway; LL-2,6-diaminopimelate from (S)-tetrahydrodipicolinate (succinylase route): step 1/3. The protein is 2,3,4,5-tetrahydropyridine-2,6-dicarboxylate N-succinyltransferase of Delftia acidovorans (strain DSM 14801 / SPH-1).